A 215-amino-acid chain; its full sequence is Octanoyltransferase (215 aa).

Residues 31–206 (PDSQDEIWLV…QLVKHLDYAE (176 aa)) enclose the BPL/LPL catalytic domain. Residues 70–77 (RGGQVTYH), 137–139 (SLG), and 150–152 (GLA) each bind substrate. Residue Cys-168 is the Acyl-thioester intermediate of the active site.

The protein belongs to the LipB family.

It is found in the cytoplasm. It catalyses the reaction octanoyl-[ACP] + L-lysyl-[protein] = N(6)-octanoyl-L-lysyl-[protein] + holo-[ACP] + H(+). It participates in protein modification; protein lipoylation via endogenous pathway; protein N(6)-(lipoyl)lysine from octanoyl-[acyl-carrier-protein]: step 1/2. In terms of biological role, catalyzes the transfer of endogenously produced octanoic acid from octanoyl-acyl-carrier-protein onto the lipoyl domains of lipoate-dependent enzymes. Lipoyl-ACP can also act as a substrate although octanoyl-ACP is likely to be the physiological substrate. The polypeptide is Octanoyltransferase (Pseudomonas putida (strain W619)).